Reading from the N-terminus, the 78-residue chain is Small ribosomal subunit protein bS16 (78 aa).

This sequence belongs to the bacterial ribosomal protein bS16 family.

The sequence is that of Small ribosomal subunit protein bS16 from Thermodesulfovibrio yellowstonii (strain ATCC 51303 / DSM 11347 / YP87).